An 83-amino-acid chain; its full sequence is Large ribosomal subunit protein uL24 (83 aa).

The protein belongs to the universal ribosomal protein uL24 family. Part of the 50S ribosomal subunit.

One of two assembly initiator proteins, it binds directly to the 5'-end of the 23S rRNA, where it nucleates assembly of the 50S subunit. Its function is as follows. One of the proteins that surrounds the polypeptide exit tunnel on the outside of the subunit. The chain is Large ribosomal subunit protein uL24 from Symbiobacterium thermophilum (strain DSM 24528 / JCM 14929 / IAM 14863 / T).